The chain runs to 122 residues: Large ribosomal subunit protein uL14 (122 aa).

This sequence belongs to the universal ribosomal protein uL14 family. Part of the 50S ribosomal subunit. Forms a cluster with proteins L3 and L19. In the 70S ribosome, L14 and L19 interact and together make contacts with the 16S rRNA in bridges B5 and B8.

Its function is as follows. Binds to 23S rRNA. Forms part of two intersubunit bridges in the 70S ribosome. The sequence is that of Large ribosomal subunit protein uL14 from Campylobacter jejuni subsp. jejuni serotype O:6 (strain 81116 / NCTC 11828).